The chain runs to 277 residues: Polar tube protein 2 (277 aa).

The first 18 residues, Met1 to Pro18, serve as a signal peptide directing secretion. The N-linked (GlcNAc...) asparagine glycan is linked to Asn134. The span at Gln237–Ala251 shows a compositional bias: basic and acidic residues. Residues Gln237–Glu277 form a disordered region. Positions Ser255–Glu265 are enriched in acidic residues.

As to quaternary structure, interacts with PTP1 and PTP3.

The protein localises to the spore polar tube. Functionally, involved in formation of a polar tube through which the infectious agent is passed on to the host cell. The sequence is that of Polar tube protein 2 (PTP2) from Encephalitozoon cuniculi (strain GB-M1) (Microsporidian parasite).